The sequence spans 172 residues: RNA silencing suppressor p19 (172 aa).

A disordered region spans residues 153-172 (EGNVSRGSPEGTEAFKEESE).

It belongs to the tombusvirus protein p19 family. Homodimer.

In terms of biological role, viral suppressor of RNA silencing which binds specifically to silencing RNAs (siRNAs). Acts as a molecular caliper to specifically select siRNAs based on the length of the duplex region of the RNA. The polypeptide is RNA silencing suppressor p19 (Pear latent virus (PeLV)).